Consider the following 864-residue polypeptide: Sine oculis-binding protein homolog (864 aa).

Basic and acidic residues predominate over residues 1 to 14 (MAEMEKEGRPPENK). Positions 1–25 (MAEMEKEGRPPENKRSRKPAHPVKR) are disordered. 2 FCS-type zinc fingers span residues 142 to 180 (DEVS…KCFA) and 216 to 256 (FKNN…KCLN). Disordered regions lie at residues 304–360 (LTDA…ETPS), 413–484 (RGPP…PGAP), and 550–616 (KPPN…RGRG). Composition is skewed to low complexity over residues 314–335 (PVAA…VSPS) and 417–433 (HHAS…MLPG). Pro residues predominate over residues 460 to 484 (IHPPSTPTMPGNPPGLLPPPPPGAP). Composition is skewed to low complexity over residues 565 to 582 (SAPG…GRSL) and 590 to 603 (GSSK…GSSG). The short motif at 618-622 (VVDLT) is the SUMO interaction motif 1 (SIM); mediates the binding to polysumoylated substrates element. S627 bears the Phosphoserine mark. The SUMO interaction motif 2 (SIM); mediates the binding to polysumoylated substrates motif lies at 648–652 (VIDLT). A Glycyl lysine isopeptide (Lys-Gly) (interchain with G-Cter in SUMO2) cross-link involves residue K672. S694 carries the phosphoserine modification. Residues 725 to 750 (APAEAKGAEPPPEQPPPPAPPKKLLS) form a disordered region. Residues 733–745 (EPPPEQPPPPAPP) show a composition bias toward pro residues.

Belongs to the SOBP family. Interacts (via SIM domains) with SUMO1 and SUMO2.

In terms of biological role, implicated in development of the cochlea. This chain is Sine oculis-binding protein homolog, found in Rattus norvegicus (Rat).